The following is a 100-amino-acid chain: Aspartyl/glutamyl-tRNA(Asn/Gln) amidotransferase subunit C (100 aa).

It belongs to the GatC family. As to quaternary structure, heterotrimer of A, B and C subunits.

It carries out the reaction L-glutamyl-tRNA(Gln) + L-glutamine + ATP + H2O = L-glutaminyl-tRNA(Gln) + L-glutamate + ADP + phosphate + H(+). The catalysed reaction is L-aspartyl-tRNA(Asn) + L-glutamine + ATP + H2O = L-asparaginyl-tRNA(Asn) + L-glutamate + ADP + phosphate + 2 H(+). Its function is as follows. Allows the formation of correctly charged Asn-tRNA(Asn) or Gln-tRNA(Gln) through the transamidation of misacylated Asp-tRNA(Asn) or Glu-tRNA(Gln) in organisms which lack either or both of asparaginyl-tRNA or glutaminyl-tRNA synthetases. The reaction takes place in the presence of glutamine and ATP through an activated phospho-Asp-tRNA(Asn) or phospho-Glu-tRNA(Gln). The protein is Aspartyl/glutamyl-tRNA(Asn/Gln) amidotransferase subunit C of Streptococcus equi subsp. zooepidemicus (strain H70).